Here is an 85-residue protein sequence, read N- to C-terminus: Colicin-E8 immunity protein in ColE6 (85 aa).

The protein belongs to the colicins ColE2/ColE8/ColE9 and pyocins S1/S2 family.

The chain is Colicin-E8 immunity protein in ColE6 (imm) from Escherichia coli.